The following is a 426-amino-acid chain: 3-phosphoshikimate 1-carboxyvinyltransferase (426 aa).

3-phosphoshikimate is bound by residues K20, S21, and R25. Phosphoenolpyruvate is bound at residue K20. 2 residues coordinate phosphoenolpyruvate: G92 and R120. Residues S166, Q168, D312, and K339 each contribute to the 3-phosphoshikimate site. Q168 is a binding site for phosphoenolpyruvate. Residue D312 is the Proton acceptor of the active site. R385 contributes to the phosphoenolpyruvate binding site.

The protein belongs to the EPSP synthase family. Monomer.

The protein resides in the cytoplasm. It catalyses the reaction 3-phosphoshikimate + phosphoenolpyruvate = 5-O-(1-carboxyvinyl)-3-phosphoshikimate + phosphate. It participates in metabolic intermediate biosynthesis; chorismate biosynthesis; chorismate from D-erythrose 4-phosphate and phosphoenolpyruvate: step 6/7. Catalyzes the transfer of the enolpyruvyl moiety of phosphoenolpyruvate (PEP) to the 5-hydroxyl of shikimate-3-phosphate (S3P) to produce enolpyruvyl shikimate-3-phosphate and inorganic phosphate. In Streptococcus suis (strain 98HAH33), this protein is 3-phosphoshikimate 1-carboxyvinyltransferase.